The chain runs to 336 residues: UDP-3-O-acylglucosamine N-acyltransferase (336 aa).

The Proton acceptor role is filled by His233.

It belongs to the transferase hexapeptide repeat family. LpxD subfamily. In terms of assembly, homotrimer.

It catalyses the reaction a UDP-3-O-[(3R)-3-hydroxyacyl]-alpha-D-glucosamine + a (3R)-hydroxyacyl-[ACP] = a UDP-2-N,3-O-bis[(3R)-3-hydroxyacyl]-alpha-D-glucosamine + holo-[ACP] + H(+). Its pathway is bacterial outer membrane biogenesis; LPS lipid A biosynthesis. Functionally, catalyzes the N-acylation of UDP-3-O-acylglucosamine using 3-hydroxyacyl-ACP as the acyl donor. Is involved in the biosynthesis of lipid A, a phosphorylated glycolipid that anchors the lipopolysaccharide to the outer membrane of the cell. The chain is UDP-3-O-acylglucosamine N-acyltransferase from Helicobacter pylori (strain HPAG1).